A 330-amino-acid chain; its full sequence is Protein RecA (330 aa).

66–73 provides a ligand contact to ATP; the sequence is GPESSGKT.

Belongs to the RecA family.

It localises to the cytoplasm. Its function is as follows. Can catalyze the hydrolysis of ATP in the presence of single-stranded DNA, the ATP-dependent uptake of single-stranded DNA by duplex DNA, and the ATP-dependent hybridization of homologous single-stranded DNAs. It interacts with LexA causing its activation and leading to its autocatalytic cleavage. The chain is Protein RecA from Bacteroides thetaiotaomicron (strain ATCC 29148 / DSM 2079 / JCM 5827 / CCUG 10774 / NCTC 10582 / VPI-5482 / E50).